Here is a 115-residue protein sequence, read N- to C-terminus: Large ribosomal subunit protein bL19 (115 aa).

It belongs to the bacterial ribosomal protein bL19 family.

Functionally, this protein is located at the 30S-50S ribosomal subunit interface and may play a role in the structure and function of the aminoacyl-tRNA binding site. The chain is Large ribosomal subunit protein bL19 from Streptococcus pneumoniae (strain JJA).